We begin with the raw amino-acid sequence, 143 residues long: S-adenosylmethionine decarboxylase proenzyme (143 aa).

Serine 66 (schiff-base intermediate with substrate; via pyruvic acid) is an active-site residue. Pyruvic acid (Ser); by autocatalysis is present on serine 66. Histidine 71 serves as the catalytic Proton acceptor; for processing activity. Residue cysteine 86 is the Proton donor; for catalytic activity of the active site.

It belongs to the prokaryotic AdoMetDC family. Type 1 subfamily. Heterotetramer of two alpha and two beta chains arranged as a dimer of alpha/beta heterodimers. Pyruvate serves as cofactor. Is synthesized initially as an inactive proenzyme. Formation of the active enzyme involves a self-maturation process in which the active site pyruvoyl group is generated from an internal serine residue via an autocatalytic post-translational modification. Two non-identical subunits are generated from the proenzyme in this reaction, and the pyruvate is formed at the N-terminus of the alpha chain, which is derived from the carboxyl end of the proenzyme. The post-translation cleavage follows an unusual pathway, termed non-hydrolytic serinolysis, in which the side chain hydroxyl group of the serine supplies its oxygen atom to form the C-terminus of the beta chain, while the remainder of the serine residue undergoes an oxidative deamination to produce ammonia and the pyruvoyl group blocking the N-terminus of the alpha chain.

It catalyses the reaction S-adenosyl-L-methionine + H(+) = S-adenosyl 3-(methylsulfanyl)propylamine + CO2. It participates in amine and polyamine biosynthesis; S-adenosylmethioninamine biosynthesis; S-adenosylmethioninamine from S-adenosyl-L-methionine: step 1/1. Functionally, catalyzes the decarboxylation of S-adenosylmethionine to S-adenosylmethioninamine (dcAdoMet), the propylamine donor required for the synthesis of the polyamines spermine and spermidine from the diamine putrescine. The sequence is that of S-adenosylmethionine decarboxylase proenzyme from Thermococcus gammatolerans (strain DSM 15229 / JCM 11827 / EJ3).